The following is a 536-amino-acid chain: Light-independent protochlorophyllide reductase subunit B (536 aa).

Asp-36 is a [4Fe-4S] cluster binding site. The Proton donor role is filled by Asp-292. 427–428 provides a ligand contact to substrate; that stretch reads GL. The tract at residues 447 to 489 is disordered; that stretch reads QSHLGHLGGHQSQTEQQQSQAATNPSTQSNTDSSSEESPLWTP. A compositionally biased stretch (low complexity) spans 448-469; that stretch reads SHLGHLGGHQSQTEQQQSQAAT. The segment covering 470-483 has biased composition (polar residues); it reads NPSTQSNTDSSSEE.

It belongs to the ChlB/BchB/BchZ family. In terms of assembly, protochlorophyllide reductase is composed of three subunits; ChlL, ChlN and ChlB. Forms a heterotetramer of two ChlB and two ChlN subunits. The cofactor is [4Fe-4S] cluster.

The enzyme catalyses chlorophyllide a + oxidized 2[4Fe-4S]-[ferredoxin] + 2 ADP + 2 phosphate = protochlorophyllide a + reduced 2[4Fe-4S]-[ferredoxin] + 2 ATP + 2 H2O. It participates in porphyrin-containing compound metabolism; chlorophyll biosynthesis (light-independent). Functionally, component of the dark-operative protochlorophyllide reductase (DPOR) that uses Mg-ATP and reduced ferredoxin to reduce ring D of protochlorophyllide (Pchlide) to form chlorophyllide a (Chlide). This reaction is light-independent. The NB-protein (ChlN-ChlB) is the catalytic component of the complex. This chain is Light-independent protochlorophyllide reductase subunit B, found in Prochlorococcus marinus (strain MIT 9303).